A 133-amino-acid chain; its full sequence is CDGSH iron-sulfur domain protein (133 aa).

Residues 1 to 35 (MEPISHLVKSSLPNYLSSLPVPDSIGGWFKLSFKD) lie on the Lumenal side of the membrane. The helical transmembrane segment at 36-58 (WLALIPPTVVVAGLGYTAYLAYC) threads the bilayer. At 59 to 133 (PAARASCAAK…DNVGPIVIKK (75 aa)) the chain is on the cytoplasmic side. Positions 100, 102, 111, and 115 each coordinate [2Fe-2S] cluster.

Belongs to the CISD protein family. CISD2 subfamily. It depends on [2Fe-2S] cluster as a cofactor.

It localises to the endoplasmic reticulum membrane. The protein is CDGSH iron-sulfur domain protein of Drosophila melanogaster (Fruit fly).